Here is a 1022-residue protein sequence, read N- to C-terminus: Sodium/potassium-transporting ATPase subunit alpha-1 (1022 aa).

The propeptide occupies 1–5 (MGRGT). The span at 1–10 (MGRGTGHDQY) shows a compositional bias: basic and acidic residues. The interval 1–34 (MGRGTGHDQYELAATSEGGRKKKRDKKKKDMDDL) is disordered. Residues 6 to 86 (GHDQYELAAT…NALTPPPTTP (81 aa)) are Cytoplasmic-facing. Position 16 is a phosphoserine; by PKC (S16). The interaction with phosphoinositide-3 kinase stretch occupies residues 81-83 (PPP). The helical transmembrane segment at 87–107 (EWVKFCRQLFGGFSMLLWIGA) threads the bilayer. Over 108-130 (ILCFLAYGIQAASEDEPANDNLY) the chain is Extracellular. A helical transmembrane segment spans residues 131–151 (LGVVLSAVVIITGCFSYYQEA). Residues 152–287 (KSSRIMDSFK…VGRTPISIEI (136 aa)) lie on the Cytoplasmic side of the membrane. A disordered region spans residues 213–234 (DNSSLTGESEPQTRSPDFSNEN). Residues 288–307 (EHFIHIITGVAVFLGVSFFI) form a helical membrane-spanning segment. Over 308 to 319 (LSLILGYAWLEA) the chain is Extracellular. A helical transmembrane segment spans residues 320-337 (VIFLIGIIVANVPEGLLA). The Cytoplasmic portion of the chain corresponds to 338–771 (TVTVCLTLTA…EEGRLIFDNL (434 aa)). D375 acts as the 4-aspartylphosphate intermediate in catalysis. K486 is a binding site for ATP. The Mg(2+) site is built by D716 and D720. A helical membrane pass occupies residues 772-791 (KKSIAYTLTSNIPEITPFLL). Over 792–801 (FIIANIPLPL) the chain is Extracellular. Residues 802-822 (GTVTILCIDLGTDMVPAISLA) traverse the membrane as a helical segment. The Cytoplasmic segment spans residues 823–842 (YEAAESDIMKRQPRNPRTDK). The chain crosses the membrane as a helical span at residues 843-865 (LVNERLISIAYGQIGMMQATAGF). The Extracellular segment spans residues 866–917 (FTYFVILAENGFLPSTLLGIRVKWDDKYVNDLEDSYGQQWTYEQRKIVEYTC). Residues 918 to 937 (HTSFFASIVIVQWADLIICK) form a helical membrane-spanning segment. Residues 938-950 (TRRNSIIQQGMKN) lie on the Cytoplasmic side of the membrane. A Phosphoserine; by PKA modification is found at S942. A helical membrane pass occupies residues 951–969 (KILIFGLFEETALAAFLSY). The Extracellular segment spans residues 970–984 (CPGMDVALRMYPLKP). The helical transmembrane segment at 985-1005 (SWWFCAFPYSLLIFLYDEARR) threads the bilayer. The Cytoplasmic segment spans residues 1006–1022 (FILRRNPDGWVERETYY).

This sequence belongs to the cation transport ATPase (P-type) (TC 3.A.3) family. Type IIC subfamily. In terms of assembly, the sodium/potassium-transporting ATPase is composed of a catalytic alpha subunit, an auxiliary non-catalytic beta subunit and an additional regulatory subunit.

Its subcellular location is the cell membrane. The protein resides in the sarcolemma. The catalysed reaction is K(+)(out) + Na(+)(in) + ATP + H2O = K(+)(in) + Na(+)(out) + ADP + phosphate + H(+). This is the catalytic component of the active enzyme, which catalyzes the hydrolysis of ATP coupled with the exchange of sodium and potassium ions across the plasma membrane. This action creates the electrochemical gradient of sodium and potassium ions, providing the energy for active transport of various nutrients. The chain is Sodium/potassium-transporting ATPase subunit alpha-1 (atp1a1) from Anguilla anguilla (European freshwater eel).